Reading from the N-terminus, the 238-residue chain is Serine protease SplE (238 aa).

The first 36 residues, 1–36, serve as a signal peptide directing secretion; it reads MNKNIIIKSIAALTILTSVTGVGTTVVEGIQQTAKA. Residues H75, D113, and S191 each act as charge relay system in the active site.

This sequence belongs to the peptidase S1B family.

It localises to the secreted. This is Serine protease SplE (splE) from Staphylococcus aureus (strain USA300).